The chain runs to 160 residues: MKSLQKGFTLIELMIVVAIIGILAAFAIPAYNDYIARSQAAEGVSLADGLKVRIAENLQDGECKGPDADPASGVVGNQDKGKYALAEIKGDYDASKTDAGDPNGCQVEITYGQGTAEGKISKLITGKKLVLEQLVNGSFIAGAGTDLADKFIPNAVKVKK.

Positions Met-1 to Gly-7 are cleaved as a propeptide — leader sequence. Phe-8 carries the N-methylphenylalanine modification. Residues Phe-8–Ile-28 traverse the membrane as a helical segment.

The protein belongs to the N-Me-Phe pilin family. In terms of assembly, the pili are polar flexible filaments of about 5.4 nanometers diameter and 2.5 micrometers average length; they consist of only a single polypeptide chain arranged in a helical configuration of five subunits per turn in the assembled pilus.

The protein localises to the fimbrium. It localises to the membrane. In Dichelobacter nodosus (Bacteroides nodosus), this protein is Fimbrial protein (fimA).